The following is a 1947-amino-acid chain: MIKKNLFKDFSRFSFVQSSIKNNVRCHSKLKLVQPFFIKTKQERNKKFLSSYKFSEIQLITIDLASPEKIKEWAEKKLPNGKIFGQVTNPNTLHYKTLKPLKGGLFCERIFGPIKDFECACGIQKQKPFNRIISFQNKQFCSKCDIEYTWSDIRRYQLGYIQLVTPVTHLWYLKGMPSYIRSVLGAKKKHIEAIAYCSEIVTIDQAWKPNRLIPFPETISSVALSSKKRNTFVNKEIVNIQLTYNNFKKFNVNNTRSLYVSINKKLFKKQFSNNSYNCTCVDNEIQNPIFFLKYFNINFLKPQNLKELKVLYINPDFYKVENYPYKNQVKFEFYQKICRSFIKTSLNNHKPIYALNYLSHSFLNSKVKIFSHFEHIDIHTMYVFNEEILINRFSNLARLKKNGKSKKKIGYIHSKKIHININKHLLYFKNKKLKNLQLSNNLKLIIIISNNASLNYFKNWSNTFNCMNTLILKMQFVNKKLHFQYYRSFFNTHTIERVYFNFFSLDYLKNSNFFVNFSKLLALNLLKFMKSNLFNIFIIPIPTILDNFIFKLSLDSQFQRLLNSLSIQKQKVLNSNSVISKSNKIFKKQFFIKNFSLYDEAIEILWQRFWKFGYYFTSNNMNNKLCKIITKFNKNNNGLRSTLPSWLKLIKKLIKKTQIDKKSNQNLLNFRVNVIHTNTQNKFSLFVNLIKIYLKKVLFLFQIAPENIKNIYIKKSIFIFQELRNKNFKYRNFRTQIKKIVIKLFGLELLPWVLSQFIFTSKIFYQFQKSKFSFYHNSNFLTFSRRHSGRNLIKKIKESSFLNFQIGVNNINTIFHYKYSFNCLPSCHIPNYKCRQKFFIYKNKIENILKLKKFRLFFNIWLSRFLKNNISVLNVVVNLKLNNINSNNLQTLNLLFYQKKWLLKKKQIFYNYAMLKEFHSKLLIVGTLHDFSNFIKLIYSSSYKNETLINIFSIQIQPFYKFNFIQKIRKYLNSEYYNSFDSGRTKHYLRKFLNKDSDNLFFKQFNYVYYFILFSSIISTQTIERGSLTSLNNQQFFLNLLCFFKLAKKNIFKKYSWLTSIQKYFYSRQIIKYKKKQQQKSMLKFVKKKTFFNKFLDLINSFIYDYQKRLKLLKKHSIIQLILKKKMYIFYFLKKLQNKLINEIQKYYFYEFEKKKFINIEFNLNNFKNIVIFMNLKKKILFLNSVLFQSQTNFFNKHANLNIFNNSYNYMYIDFNNFLSIGQFWQILINIFKNKINKYYLLSRSLPFIISNDYVKIDPLIKKFHDDLKHQVCFNSFLIKLTFYNSTLLYPLQNIIKNNNKVLQTRQQYYKIIKSNNLFLTNYFKKIRGNFTELSIKKFENIHTIVSCIGYFGYQDILYHQIRELKKNDYFRNFYLKFIKHDLSNNFNEAIFSVISESRISYNDSIFWNNIYSLSNRYSWKSDIELNIFLCYMLSPETPSDILIPLYKQRIHSSNVLREEPPIAGGGIILKLLKELDLPEMKKIDIQLQTILKKIPNKLHEIEVLLKHNQTNLKLLKYYSLKRRTVIEIEKSILRKLKYIRRLNWVSAKPEYMIIRNLPVLPADLRPIFKIQQQLTASDLNRLYQKVIYRNDRLKRFLKNSTTSNSFEMLFAQRMLQEAVDNLIENGKDINSIETDSRGRPLKSLGELLKGKKGRFRQNLLGKRVDYSGRSVIVVGPKLKLHECGLPIEMAIELFLPFLIKEILKNKYALTVRSAKIYIKKHRIKITQLLRQVVKRQPILLNRAPTLHRLGIQAFLPKLVEGKAILLHPLVCSAFNADFDGDQMAVHVPITNEARIEAWKLVLSRNNLLSPATGEPILLPSQDMVLGCYYLTIENLQSLTQKKFRINRKILNQRNYIFSDFEKIFIAYQRNQINLHTNIWVIFNNTIESDSILQEPTEIQVLFSGQYIKVYSDYYQKFNRNGKIYNQVVRTTPGRILFNLMLNNCFN.

The Zn(2+) site is built by Cys-119, Cys-121, Cys-141, and Cys-144. Asp-1778, Asp-1780, and Asp-1782 together coordinate Mg(2+).

It belongs to the RNA polymerase beta' chain family. RpoC1 subfamily. As to quaternary structure, in plastids the minimal PEP RNA polymerase catalytic core is composed of four subunits: alpha, beta, beta', and beta''. When a (nuclear-encoded) sigma factor is associated with the core the holoenzyme is formed, which can initiate transcription. Mg(2+) serves as cofactor. Requires Zn(2+) as cofactor.

Its subcellular location is the plastid. The protein localises to the chloroplast. It carries out the reaction RNA(n) + a ribonucleoside 5'-triphosphate = RNA(n+1) + diphosphate. In terms of biological role, DNA-dependent RNA polymerase catalyzes the transcription of DNA into RNA using the four ribonucleoside triphosphates as substrates. The sequence is that of DNA-directed RNA polymerase subunit beta' from Oedogonium cardiacum (Filamentous green alga).